Reading from the N-terminus, the 622-residue chain is Chaperone protein HscA homolog (622 aa).

Belongs to the heat shock protein 70 family.

In terms of biological role, chaperone involved in the maturation of iron-sulfur cluster-containing proteins. Has a low intrinsic ATPase activity which is markedly stimulated by HscB. This is Chaperone protein HscA homolog from Burkholderia pseudomallei (strain 1710b).